The primary structure comprises 489 residues: Hydantoin permease (489 aa).

12 consecutive transmembrane segments (helical) span residues 30–50 (FSLAAIWFAMAIQVAIFIAAG), 58–78 (VWQVIVAIAAGCTIAVILLFF), 104–124 (LIPITLKALLSLFWFGFQTWL), 144–164 (LWIVIFGAIQVVTTFYGITFI), 167–187 (MNVFASPVLLAMGVYMVYLML), 207–227 (MPFSTAIMIFVGGWIAVVVSI), 258–278 (LGMVPASIIFGFIGAASMVLV), 299–321 (AILFQVFVLLATWSTNPAANLLS), 339–359 (GVIVSAVVGLLMMPWQFAGVL), 362–382 (FLNLLASALGPLAGIMISDYF), 405–424 (RGVNWVALAVYAVALAVSFL), and 428–445 (LMFVTGLIAALLLHIPAM). The Na(+) site is built by alanine 38 and isoleucine 41. Glutamine 121 is a substrate binding site. Glycine 219 is a binding site for substrate. 3 residues coordinate Na(+): alanine 309, serine 312, and threonine 313. Residue asparagine 318 coordinates substrate. The tract at residues 468-489 (PIGPVAPADESATANTKEQNQR) is disordered. Residues 479–489 (ATANTKEQNQR) show a composition bias toward polar residues.

The protein belongs to the purine-cytosine permease (2.A.39) family.

Its subcellular location is the membrane. With respect to regulation, inhibited by dinitrophenol, 5-(2-naphthylmethyl)-D-hydantoin (D-NMH), 5-(2-naphthylmethyl)-L-hydantoin (L-NMH), 5-bromovinylhydantoin (BVH) and 5-indolylmethyl-L-hydantoin (L-IMH). The affinity of benzyl-hydantoin is increased over 10-fold in the presence of 15 mM of sodium. Its function is as follows. Nucleobase-proton symporter that mediates the sodium-dependent binding and uptake of 5-aryl-substituted hydantoin compounds. 5-indolyl methyl hydantoin and 5-benzyl hydantoin are the preferred substrates, with selectivity for a hydrophobic substituent in position 5 of hydantoin and for the L isomer over the D isomer. In Microbacterium maritypicum (Microbacterium liquefaciens), this protein is Hydantoin permease.